Reading from the N-terminus, the 330-residue chain is Alpha/beta hydrolase domain-containing protein VTE7 (330 aa).

In terms of domain architecture, AB hydrolase-1 spans 84–315 (VVLLHCFDSS…GHLPHVENPK (232 aa)). Ser-157 functions as the Nucleophile in the catalytic mechanism. Active-site charge relay system residues include Asp-279 and His-307.

It belongs to the AB hydrolase superfamily.

The protein localises to the plastid. Its subcellular location is the chloroplast envelope. In terms of biological role, hydrolase involved in tocopherol (vitamin E) biosynthesis. Releases prenyl alcohols from chlorophyll biosynthetic intermediates, which are then converted to the corresponding diphosphates for tocopherol biosynthesis. Provides most of the phytol from chlorophyll for tocopherol biosynthesis in seeds. The polypeptide is Alpha/beta hydrolase domain-containing protein VTE7 (Arabidopsis thaliana (Mouse-ear cress)).